Reading from the N-terminus, the 1330-residue chain is G2/mitotic-specific cyclin-B3 (1330 aa).

Residues 1–50 form a disordered region; that stretch reads MPLPLPSRSSKPETKKSRSSKIVPSGNNGQSEKRGENYQEKISSSSPRRL. The span at 20 to 30 shows a compositional bias: polar residues; sequence SKIVPSGNNGQ. A D-box motif is present at residues 54–62; that stretch reads RSAFEDLTN. The tract at residues 1002 to 1059 is disordered; sequence VETSSRVPSTPPESRAGMSSVGKLSTTSKSSVCESSSNKPSSSWGESSQKEMTPLEDI. The segment covering 1026 to 1048 has biased composition (low complexity); sequence STTSKSSVCESSSNKPSSSWGES.

Belongs to the cyclin family. Cyclin AB subfamily. In terms of assembly, interacts with CDK2 kinase. Post-translationally, ubiquitinated. Ubiquitination leads to its degradation during anaphase entry, after degradation of CCNB1.

The protein resides in the nucleus. Functionally, cyclins are positive regulatory subunits of the cyclin-dependent kinases (CDKs), and thereby play an essential role in the control of the cell cycle, notably via their destruction during cell division. Its tissue specificity suggest that it may be required during early meiotic prophase I. The polypeptide is G2/mitotic-specific cyclin-B3 (CCNB3) (Canis lupus familiaris (Dog)).